Here is a 723-residue protein sequence, read N- to C-terminus: Pentatricopeptide repeat-containing protein At5g50280, chloroplastic (723 aa).

Residues M1 to S44 constitute a chloroplast transit peptide. The tract at residues I70 to T97 is disordered. A compositionally biased stretch (acidic residues) spans E81–T97. PPR repeat units follow at residues D272–P306, D307–W342, S343–S377, N378–P412, S413–P447, N448–P483, S484–P518, S519–G553, T554–P588, S589–P623, and D624–P658. A disordered region spans residues T700 to S723. Residues N713 to S723 are compositionally biased toward polar residues.

The protein belongs to the PPR family. P subfamily.

It localises to the plastid. The protein resides in the chloroplast. This is Pentatricopeptide repeat-containing protein At5g50280, chloroplastic (EMB1006) from Arabidopsis thaliana (Mouse-ear cress).